A 274-amino-acid chain; its full sequence is 4-diphosphocytidyl-2-C-methyl-D-erythritol kinase (274 aa).

The active site involves Lys14. 94–104 (PMQAGLGGGSS) contacts ATP. Asp134 is a catalytic residue.

This sequence belongs to the GHMP kinase family. IspE subfamily.

The enzyme catalyses 4-CDP-2-C-methyl-D-erythritol + ATP = 4-CDP-2-C-methyl-D-erythritol 2-phosphate + ADP + H(+). It functions in the pathway isoprenoid biosynthesis; isopentenyl diphosphate biosynthesis via DXP pathway; isopentenyl diphosphate from 1-deoxy-D-xylulose 5-phosphate: step 3/6. Catalyzes the phosphorylation of the position 2 hydroxy group of 4-diphosphocytidyl-2C-methyl-D-erythritol. The protein is 4-diphosphocytidyl-2-C-methyl-D-erythritol kinase of Thermosipho melanesiensis (strain DSM 12029 / CIP 104789 / BI429).